The sequence spans 397 residues: CCA-adding enzyme (397 aa).

Gly-26 and Arg-29 together coordinate ATP. Residues Gly-26 and Arg-29 each contribute to the CTP site. Residues Asp-39 and Asp-41 each contribute to the Mg(2+) site. The ATP site is built by Arg-110, Asp-153, Arg-156, Arg-159, and Arg-162. Residues Arg-110, Asp-153, Arg-156, Arg-159, and Arg-162 each coordinate CTP.

Belongs to the tRNA nucleotidyltransferase/poly(A) polymerase family. Bacterial CCA-adding enzyme type 3 subfamily. As to quaternary structure, homodimer. Mg(2+) is required as a cofactor.

It catalyses the reaction a tRNA precursor + 2 CTP + ATP = a tRNA with a 3' CCA end + 3 diphosphate. The catalysed reaction is a tRNA with a 3' CCA end + 2 CTP + ATP = a tRNA with a 3' CCACCA end + 3 diphosphate. Its function is as follows. Catalyzes the addition and repair of the essential 3'-terminal CCA sequence in tRNAs without using a nucleic acid template. Adds these three nucleotides in the order of C, C, and A to the tRNA nucleotide-73, using CTP and ATP as substrates and producing inorganic pyrophosphate. tRNA 3'-terminal CCA addition is required both for tRNA processing and repair. Also involved in tRNA surveillance by mediating tandem CCA addition to generate a CCACCA at the 3' terminus of unstable tRNAs. While stable tRNAs receive only 3'-terminal CCA, unstable tRNAs are marked with CCACCA and rapidly degraded. This is CCA-adding enzyme from Bacillus cereus (strain ATCC 10987 / NRS 248).